The following is a 418-amino-acid chain: Tyrosine--tRNA ligase 1 (418 aa).

Y34 is a binding site for L-tyrosine. Residues 39–48 carry the 'HIGH' region motif; the sequence is PTADSLHIGH. Y169 and Q173 together coordinate L-tyrosine. Residues 230–234 carry the 'KMSKS' region motif; sequence KFGKT. K233 provides a ligand contact to ATP. Residues 352–418 form the S4 RNA-binding domain; the sequence is TVLIDLLVES…GKKKYFLIRY (67 aa).

This sequence belongs to the class-I aminoacyl-tRNA synthetase family. TyrS type 1 subfamily. Homodimer.

It is found in the cytoplasm. The enzyme catalyses tRNA(Tyr) + L-tyrosine + ATP = L-tyrosyl-tRNA(Tyr) + AMP + diphosphate + H(+). Catalyzes the attachment of tyrosine to tRNA(Tyr) in a two-step reaction: tyrosine is first activated by ATP to form Tyr-AMP and then transferred to the acceptor end of tRNA(Tyr). This chain is Tyrosine--tRNA ligase 1, found in Bacillus cereus (strain ATCC 14579 / DSM 31 / CCUG 7414 / JCM 2152 / NBRC 15305 / NCIMB 9373 / NCTC 2599 / NRRL B-3711).